The primary structure comprises 226 residues: MKYFLDSAILEEIRYAYENWAIDGVTTNPRHIMNSGKPFLTVLDEFASEFKGVENFPISVEINPHLDNAKDMVEEGTKIAKLSSNFVIKIPCTEPGLIAAKEFEKQGISTNVTLVFSPSQALQPARIGAKFVSPFVGWKENSGDDTTQYIQDIVNIYKNYNYNTEIIVAALRNGKQIVDAAKAGAHIVTCGFDVYKESFQHAFTDYGLNKFRNAWDNTVTEAPVLK.

K89 serves as the catalytic Schiff-base intermediate with substrate.

Belongs to the transaldolase family.

It catalyses the reaction 6-deoxy-6-sulfo-D-fructose + D-glyceraldehyde 3-phosphate = D-fructose 6-phosphate + (2S)-3-sulfolactaldehyde. The enzyme catalyses 6-deoxy-6-sulfo-D-fructose + D-erythrose 4-phosphate = (2S)-3-sulfolactaldehyde + D-sedoheptulose 7-phosphate. Part of the sulfo-TAL (or sulfo-SFT) pathway, a D-sulfoquinovose degradation pathway that produces sulfolactate (SL). Catalyzes the conversion of 6-deoxy-6-sulfo-D-fructose (SF) and glyceraldehyde 3-phosphate (GAP) into fructose-6-phosphate (F6P) and 3-sulfolactaldehyde (SLA). Can also catalyze the SF-cleavage with erythrose 4-phosphate (E4P) as acceptor, forming 3-sulfolactaldehyde (SLA) and sedoheptulose 7-phosphate (S7P). The sequence is that of 6-deoxy-6-sulfo-D-fructose transaldolase from Priestia aryabhattai (Bacillus aryabhattai).